The chain runs to 156 residues: uncharacterized protein (156 aa).

To L.lactis TrpF C-terminal region.

This is an uncharacterized protein from Bacillus subtilis (strain 168).